Reading from the N-terminus, the 568-residue chain is Dihydroxy-acid dehydratase (568 aa).

Cys59 contacts [2Fe-2S] cluster. Residue Asp91 participates in Mg(2+) binding. Cys132 is a [2Fe-2S] cluster binding site. Mg(2+) contacts are provided by Asp133 and Lys134. Lys134 is subject to N6-carboxylysine. Position 204 (Cys204) interacts with [2Fe-2S] cluster. Glu456 serves as a coordination point for Mg(2+). Ser482 serves as the catalytic Proton acceptor.

It belongs to the IlvD/Edd family. As to quaternary structure, homodimer. It depends on [2Fe-2S] cluster as a cofactor. Mg(2+) serves as cofactor.

It catalyses the reaction (2R)-2,3-dihydroxy-3-methylbutanoate = 3-methyl-2-oxobutanoate + H2O. It carries out the reaction (2R,3R)-2,3-dihydroxy-3-methylpentanoate = (S)-3-methyl-2-oxopentanoate + H2O. Its pathway is amino-acid biosynthesis; L-isoleucine biosynthesis; L-isoleucine from 2-oxobutanoate: step 3/4. It participates in amino-acid biosynthesis; L-valine biosynthesis; L-valine from pyruvate: step 3/4. Functions in the biosynthesis of branched-chain amino acids. Catalyzes the dehydration of (2R,3R)-2,3-dihydroxy-3-methylpentanoate (2,3-dihydroxy-3-methylvalerate) into 2-oxo-3-methylpentanoate (2-oxo-3-methylvalerate) and of (2R)-2,3-dihydroxy-3-methylbutanoate (2,3-dihydroxyisovalerate) into 2-oxo-3-methylbutanoate (2-oxoisovalerate), the penultimate precursor to L-isoleucine and L-valine, respectively. The polypeptide is Dihydroxy-acid dehydratase (Verminephrobacter eiseniae (strain EF01-2)).